Reading from the N-terminus, the 200-residue chain is 3-isopropylmalate dehydratase small subunit (200 aa).

Belongs to the LeuD family. LeuD type 1 subfamily. Heterodimer of LeuC and LeuD.

The enzyme catalyses (2R,3S)-3-isopropylmalate = (2S)-2-isopropylmalate. It participates in amino-acid biosynthesis; L-leucine biosynthesis; L-leucine from 3-methyl-2-oxobutanoate: step 2/4. Catalyzes the isomerization between 2-isopropylmalate and 3-isopropylmalate, via the formation of 2-isopropylmaleate. This Sodalis glossinidius (strain morsitans) protein is 3-isopropylmalate dehydratase small subunit.